Consider the following 405-residue polypeptide: Caspase-1 (405 aa).

The region spanning 1–91 is the CARD domain; it reads MADKVLKEKR…HLAETLRLSS (91 aa). A propeptide spanning residues 1–119 is cleaved from the precursor; the sequence is MADKVLKEKR…SSPALQAMPD (119 aa). Catalysis depends on residues His-238 and Cys-286. Residues 299–317 constitute a propeptide that is removed on maturation; that stretch reads STGTSGNSSSLAPDDFEDD. Ser-303 carries the phosphoserine modification.

It belongs to the peptidase C14A family. Heterotetramer that consists of two anti-parallel arranged heterodimers, each one formed by a 20 kDa (Caspase-1 subunit p20) and a 10 kDa (Caspase-1 subunit p10) subunit. May be a component of the inflammasome, a protein complex which also includes PYCARD, CARD8 and NLRP2 and whose function would be the activation of pro-inflammatory caspases. Component of the AIM2 PANoptosome complex, a multiprotein complex that drives inflammatory cell death (PANoptosis). Both the p10 and p20 subunits interact with MEFV. Interacts with CARD17P/INCA and CARD18. Interacts with SERPINB1; this interaction regulates CASP1 activity. In terms of assembly, heterotetramer that consists of two anti-parallel arranged heterodimers, each one formed by a 20 kDa (Caspase-1 subunit p20) and a 10 kDa (Caspase-1 subunit p10) subunit. Post-translationally, the two subunits are derived from the precursor sequence by an autocatalytic mechanism. In terms of processing, ubiquitinated via 'Lys-11'-linked polyubiquitination. Deubiquitinated by USP8.

It localises to the cytoplasm. It is found in the cell membrane. The enzyme catalyses Strict requirement for an Asp residue at position P1 and has a preferred cleavage sequence of Tyr-Val-Ala-Asp-|-.. In terms of biological role, thiol protease involved in a variety of inflammatory processes by proteolytically cleaving other proteins, such as the precursors of the inflammatory cytokines interleukin-1 beta (IL1B) and interleukin 18 (IL18) as well as the pyroptosis inducer Gasdermin-D (GSDMD), into active mature peptides. Plays a key role in cell immunity as an inflammatory response initiator: once activated through formation of an inflammasome complex, it initiates a pro-inflammatory response through the cleavage of the two inflammatory cytokines IL1B and IL18, releasing the mature cytokines which are involved in a variety of inflammatory processes. Cleaves a tetrapeptide after an Asp residue at position P1. Also initiates pyroptosis, a programmed lytic cell death pathway, through cleavage of GSDMD. In contrast to cleavage of interleukin IL1B, recognition and cleavage of GSDMD is not strictly dependent on the consensus cleavage site but depends on an exosite interface on CASP1 that recognizes and binds the Gasdermin-D, C-terminal (GSDMD-CT) part. Cleaves and activates CASP7 in response to bacterial infection, promoting plasma membrane repair. Upon inflammasome activation, during DNA virus infection but not RNA virus challenge, controls antiviral immunity through the cleavage of CGAS, rendering it inactive. In apoptotic cells, cleaves SPHK2 which is released from cells and remains enzymatically active extracellularly. This is Caspase-1 (CASP1) from Equus caballus (Horse).